The chain runs to 138 residues: Large-conductance mechanosensitive channel (138 aa).

The next 3 membrane-spanning stretches (helical) occupy residues 15–35 (VDLAVGVIIGSAFGGLVNSVV), 38–58 (IFMPIIGLITGGIDFSNMFIQ), and 80–100 (GNFITLLINFLIISWILFFLV).

The protein belongs to the MscL family. Homopentamer.

Its subcellular location is the cell inner membrane. Functionally, channel that opens in response to stretch forces in the membrane lipid bilayer. May participate in the regulation of osmotic pressure changes within the cell. The polypeptide is Large-conductance mechanosensitive channel (Bartonella bacilliformis (strain ATCC 35685 / KC583 / Herrer 020/F12,63)).